A 417-amino-acid polypeptide reads, in one-letter code: Serine hydroxymethyltransferase 1 (417 aa).

Residues Leu121 and Gly125–Leu127 each bind (6S)-5,6,7,8-tetrahydrofolate. Lys230 bears the N6-(pyridoxal phosphate)lysine mark. (6S)-5,6,7,8-tetrahydrofolate is bound at residue Ser355–Phe357.

The protein belongs to the SHMT family. As to quaternary structure, homodimer. Pyridoxal 5'-phosphate serves as cofactor.

Its subcellular location is the cytoplasm. The catalysed reaction is (6R)-5,10-methylene-5,6,7,8-tetrahydrofolate + glycine + H2O = (6S)-5,6,7,8-tetrahydrofolate + L-serine. It participates in one-carbon metabolism; tetrahydrofolate interconversion. The protein operates within amino-acid biosynthesis; glycine biosynthesis; glycine from L-serine: step 1/1. In terms of biological role, catalyzes the reversible interconversion of serine and glycine with tetrahydrofolate (THF) serving as the one-carbon carrier. This reaction serves as the major source of one-carbon groups required for the biosynthesis of purines, thymidylate, methionine, and other important biomolecules. Also exhibits THF-independent aldolase activity toward beta-hydroxyamino acids, producing glycine and aldehydes, via a retro-aldol mechanism. The sequence is that of Serine hydroxymethyltransferase 1 from Pseudomonas putida (strain ATCC 47054 / DSM 6125 / CFBP 8728 / NCIMB 11950 / KT2440).